The primary structure comprises 65 residues: UPF0434 protein RPB_0294 (65 aa).

Belongs to the UPF0434 family.

The chain is UPF0434 protein RPB_0294 from Rhodopseudomonas palustris (strain HaA2).